We begin with the raw amino-acid sequence, 338 residues long: UPF0284 protein TV0153 (338 aa).

The protein belongs to the UPF0284 family.

In Thermoplasma volcanium (strain ATCC 51530 / DSM 4299 / JCM 9571 / NBRC 15438 / GSS1), this protein is UPF0284 protein TV0153.